We begin with the raw amino-acid sequence, 773 residues long: 5-methyltetrahydropteroyltriglutamate--homocysteine methyltransferase (773 aa).

Residues 16–19 (RELK) and Lys-116 contribute to the 5-methyltetrahydropteroyltri-L-glutamate site. L-homocysteine-binding positions include 437–439 (IGS) and Glu-490. Residues 437–439 (IGS) and Glu-490 each bind L-methionine. 5-methyltetrahydropteroyltri-L-glutamate-binding positions include 521-522 (RC) and Trp-567. Position 605 (Asp-605) interacts with L-homocysteine. Position 605 (Asp-605) interacts with L-methionine. Glu-611 lines the 5-methyltetrahydropteroyltri-L-glutamate pocket. Residues His-647, Cys-649, and Glu-671 each contribute to the Zn(2+) site. His-700 functions as the Proton donor in the catalytic mechanism. Cys-732 contacts Zn(2+).

This sequence belongs to the vitamin-B12 independent methionine synthase family. Zn(2+) is required as a cofactor.

The enzyme catalyses 5-methyltetrahydropteroyltri-L-glutamate + L-homocysteine = tetrahydropteroyltri-L-glutamate + L-methionine. The protein operates within amino-acid biosynthesis; L-methionine biosynthesis via de novo pathway; L-methionine from L-homocysteine (MetE route): step 1/1. Its function is as follows. Catalyzes the transfer of a methyl group from 5-methyltetrahydrofolate to homocysteine resulting in methionine formation. The chain is 5-methyltetrahydropteroyltriglutamate--homocysteine methyltransferase from Alkalilimnicola ehrlichii (strain ATCC BAA-1101 / DSM 17681 / MLHE-1).